An 83-amino-acid chain; its full sequence is Small ribosomal subunit protein uS17 (83 aa).

Belongs to the universal ribosomal protein uS17 family. As to quaternary structure, part of the 30S ribosomal subunit.

Functionally, one of the primary rRNA binding proteins, it binds specifically to the 5'-end of 16S ribosomal RNA. The sequence is that of Small ribosomal subunit protein uS17 from Campylobacter hominis (strain ATCC BAA-381 / DSM 21671 / CCUG 45161 / LMG 19568 / NCTC 13146 / CH001A).